The primary structure comprises 271 residues: Acetyl-coenzyme A carboxylase carboxyl transferase subunit beta (271 aa).

A CoA carboxyltransferase N-terminal domain is found at 21–271 (LWIQCPYCKQ…LGDLLALHTA (251 aa)). 4 residues coordinate Zn(2+): Cys25, Cys28, Cys43, and Cys46. A C4-type zinc finger spans residues 25–46 (CPYCKQGSYRESLGNAQVCPHC).

This sequence belongs to the AccD/PCCB family. Acetyl-CoA carboxylase is a heterohexamer composed of biotin carboxyl carrier protein (AccB), biotin carboxylase (AccC) and two subunits each of ACCase subunit alpha (AccA) and ACCase subunit beta (AccD). The cofactor is Zn(2+).

The protein localises to the cytoplasm. It catalyses the reaction N(6)-carboxybiotinyl-L-lysyl-[protein] + acetyl-CoA = N(6)-biotinyl-L-lysyl-[protein] + malonyl-CoA. The protein operates within lipid metabolism; malonyl-CoA biosynthesis; malonyl-CoA from acetyl-CoA: step 1/1. Its function is as follows. Component of the acetyl coenzyme A carboxylase (ACC) complex. Biotin carboxylase (BC) catalyzes the carboxylation of biotin on its carrier protein (BCCP) and then the CO(2) group is transferred by the transcarboxylase to acetyl-CoA to form malonyl-CoA. This is Acetyl-coenzyme A carboxylase carboxyl transferase subunit beta from Lacticaseibacillus paracasei (strain ATCC 334 / BCRC 17002 / CCUG 31169 / CIP 107868 / KCTC 3260 / NRRL B-441) (Lactobacillus paracasei).